A 332-amino-acid polypeptide reads, in one-letter code: Transaldolase (332 aa).

The active-site Schiff-base intermediate with substrate is the Lys135.

Belongs to the transaldolase family. Type 1 subfamily. As to quaternary structure, homodimer.

It localises to the cytoplasm. It carries out the reaction D-sedoheptulose 7-phosphate + D-glyceraldehyde 3-phosphate = D-erythrose 4-phosphate + beta-D-fructose 6-phosphate. It participates in carbohydrate degradation; pentose phosphate pathway; D-glyceraldehyde 3-phosphate and beta-D-fructose 6-phosphate from D-ribose 5-phosphate and D-xylulose 5-phosphate (non-oxidative stage): step 2/3. Its function is as follows. Transaldolase is important for the balance of metabolites in the pentose-phosphate pathway. This is Transaldolase from Prochlorococcus marinus (strain NATL2A).